Consider the following 592-residue polypeptide: Beta-fructofuranosidase, insoluble isoenzyme 2 (592 aa).

An N-terminal signal peptide occupies residues 1–40; sequence MLIRCFHIKMALVTCFHSMLFLSAVVFIFSLDVNIRGVEA. Residue aspartate 75 is part of the active site. N-linked (GlcNAc...) asparagine glycosylation is found at asparagine 171, asparagine 195, asparagine 310, asparagine 347, and asparagine 568.

The protein belongs to the glycosyl hydrolase 32 family.

Its subcellular location is the secreted. The protein localises to the cell wall. It catalyses the reaction Hydrolysis of terminal non-reducing beta-D-fructofuranoside residues in beta-D-fructofuranosides.. May play an important role in phloem unloading and in stress response. The polypeptide is Beta-fructofuranosidase, insoluble isoenzyme 2 (INV2) (Daucus carota (Wild carrot)).